The primary structure comprises 123 residues: TYMS opposite strand protein (123 aa).

Residues M57–I111 are disordered. The span at H91–L101 shows a compositional bias: basic residues.

The polypeptide is TYMS opposite strand protein (TYMSOS) (Homo sapiens (Human)).